A 1073-amino-acid polypeptide reads, in one-letter code: Probable inorganic carbon transporter subunit DabA 2 (1073 aa).

The span at 1–20 (MSSGNTSSQNHSPVNNQPTR) shows a compositional bias: polar residues. The tract at residues 1-35 (MSSGNTSSQNHSPVNNQPTRLKSPLPALHKDTQPN) is disordered. Residues Cys535, Asp537, His721, and Cys736 each coordinate Zn(2+).

This sequence belongs to the inorganic carbon transporter (TC 9.A.2) DabA family. In terms of assembly, forms a complex with DabB. It depends on Zn(2+) as a cofactor.

The protein localises to the cell inner membrane. Part of an energy-coupled inorganic carbon pump. The polypeptide is Probable inorganic carbon transporter subunit DabA 2 (Rhodopirellula baltica (strain DSM 10527 / NCIMB 13988 / SH1)).